The primary structure comprises 660 residues: Bifunctional polymyxin resistance protein ArnA (660 aa).

Residues 1 to 304 form a formyltransferase ArnAFT region; sequence MKAVIFAYHD…ALGLVKGALL (304 aa). The active-site Proton donor; for formyltransferase activity is His-104. (6R)-10-formyltetrahydrofolate is bound by residues Arg-114 and 136–140; that span reads TARAD. The tract at residues 314–660 is dehydrogenase ArnADH; that stretch reads RRTRVLILGV…QTVDLPDAAQ (347 aa). NAD(+) is bound by residues Asp-347 and 368–369; that span reads DI. Residues Ala-393, Tyr-398, and 432 to 433 each bind UDP-alpha-D-glucuronate; that span reads TS. Catalysis depends on Glu-434, which acts as the Proton acceptor; for decarboxylase activity. Residues Arg-460, Asn-492, 526-535, and Tyr-613 each bind UDP-alpha-D-glucuronate; that span reads KLVDGGAQKR. Catalysis depends on Arg-619, which acts as the Proton donor; for decarboxylase activity.

It in the N-terminal section; belongs to the Fmt family. UDP-L-Ara4N formyltransferase subfamily. In the C-terminal section; belongs to the NAD(P)-dependent epimerase/dehydratase family. UDP-glucuronic acid decarboxylase subfamily. As to quaternary structure, homohexamer, formed by a dimer of trimers.

The catalysed reaction is UDP-alpha-D-glucuronate + NAD(+) = UDP-beta-L-threo-pentopyranos-4-ulose + CO2 + NADH. The enzyme catalyses UDP-4-amino-4-deoxy-beta-L-arabinose + (6R)-10-formyltetrahydrofolate = UDP-4-deoxy-4-formamido-beta-L-arabinose + (6S)-5,6,7,8-tetrahydrofolate + H(+). It participates in nucleotide-sugar biosynthesis; UDP-4-deoxy-4-formamido-beta-L-arabinose biosynthesis; UDP-4-deoxy-4-formamido-beta-L-arabinose from UDP-alpha-D-glucuronate: step 1/3. Its pathway is nucleotide-sugar biosynthesis; UDP-4-deoxy-4-formamido-beta-L-arabinose biosynthesis; UDP-4-deoxy-4-formamido-beta-L-arabinose from UDP-alpha-D-glucuronate: step 3/3. It functions in the pathway bacterial outer membrane biogenesis; lipopolysaccharide biosynthesis. Its function is as follows. Bifunctional enzyme that catalyzes the oxidative decarboxylation of UDP-glucuronic acid (UDP-GlcUA) to UDP-4-keto-arabinose (UDP-Ara4O) and the addition of a formyl group to UDP-4-amino-4-deoxy-L-arabinose (UDP-L-Ara4N) to form UDP-L-4-formamido-arabinose (UDP-L-Ara4FN). The modified arabinose is attached to lipid A and is required for resistance to polymyxin and cationic antimicrobial peptides. This Sodalis glossinidius (strain morsitans) protein is Bifunctional polymyxin resistance protein ArnA.